Consider the following 307-residue polypeptide: Furaquinocin biosynthesis prenyltransferase (307 aa).

The protein belongs to the aromatic prenyltransferase family. As to quaternary structure, monomer.

The enzyme catalyses 2-O,3-dimethylflaviolin + (2E)-geranyl diphosphate = 6-linalyl-2-O,3-dimethylflaviolin + diphosphate. It catalyses the reaction 2-O,3-dimethylflaviolin + (2E)-geranyl diphosphate + H(+) = 7-O-geranyl-2-O,3-dimethylflaviolin + diphosphate. Its activity is regulated as follows. Does not require any metal cations for activity. In terms of biological role, involved in the biosynthesis of furaquinocin. Catalyzes the transfer of a geranyl group to 2-methoxy-3-methyl-flaviolin to yield 6-prenyl-2-methoxy-3-methyl-flaviolin and 7-O-geranyl-2-methoxy-3-methyl-flaviolin in a 10:1 ratio. Can also use other substrates such as flaviolin or 1,3-dihydroxy naphthalene, and can also use DMAPP as prenyl donor. This is Furaquinocin biosynthesis prenyltransferase from Streptomyces sp. (strain KO-3988).